We begin with the raw amino-acid sequence, 153 residues long: Aspartate carbamoyltransferase regulatory chain (153 aa).

The Zn(2+) site is built by C109, C114, C135, and C138.

The protein belongs to the PyrI family. As to quaternary structure, contains catalytic and regulatory chains. Zn(2+) serves as cofactor.

Its function is as follows. Involved in allosteric regulation of aspartate carbamoyltransferase. This is Aspartate carbamoyltransferase regulatory chain from Natronomonas pharaonis (strain ATCC 35678 / DSM 2160 / CIP 103997 / JCM 8858 / NBRC 14720 / NCIMB 2260 / Gabara) (Halobacterium pharaonis).